The sequence spans 406 residues: MSASQDSRSRDNGPDGMEPEGVIESNWNEIVDSLDDMNLSESLLRGIYAYGFEKPSAIQQRAILSCIKGYDVIAQAQSGTGKTATFAISILQQIELDLKATQALVLAPTRELAQQIQKVVMALGDYMGASCHACIGGTNVRAEVQKLQMEAPHIIVGTPGRVFDMLNRRYLSPKYIKMFVLDEADEMLSRGFKDQIYDIFQKLNSNTQVVLLSATMPSDVLEVTKKFMRDPIRILVKKEELTLEGIRQFYINVEREEWKLDTLCDLYETLTITQAVIFINTRRKVDWLTEKMHARDFTVSAMHGDMDQKERDVIMREFRSGSSRVLITTDLLARGIDVQQVSLVINYDLPTNRENYIHRIGRGGRFGRKGVAINMVTEEDKRTLRDIETFYNTSIEEMPLNVADLI.

Residues 1-21 form a disordered region; sequence MSASQDSRSRDNGPDGMEPEG. S2 carries the N-acetylserine modification. S4 bears the Phosphoserine mark. A Q motif motif is present at residues 32–60; it reads DSLDDMNLSESLLRGIYAYGFEKPSAIQQ. The 172-residue stretch at 63 to 234 folds into the Helicase ATP-binding domain; that stretch reads ILSCIKGYDV…KKFMRDPIRI (172 aa). 76–83 contacts ATP; it reads AQSGTGKT. K118 is modified (N6-acetyllysine). K146 is covalently cross-linked (Glycyl lysine isopeptide (Lys-Gly) (interchain with G-Cter in SUMO2)). T158 is subject to Phosphothreonine. K174 is modified (N6-acetyllysine). The short motif at 182–185 is the DEAD box element; sequence DEAD. The residue at position 193 (K193) is an N6-acetyllysine. K225 is covalently cross-linked (Glycyl lysine isopeptide (Lys-Gly) (interchain with G-Cter in SUMO2)). K238 is modified (N6-acetyllysine; alternate). K238 is covalently cross-linked (Glycyl lysine isopeptide (Lys-Gly) (interchain with G-Cter in SUMO2); alternate). One can recognise a Helicase C-terminal domain in the interval 245-406; the sequence is GIRQFYINVE…EMPLNVADLI (162 aa). Glycyl lysine isopeptide (Lys-Gly) (interchain with G-Cter in SUMO2) cross-links involve residues K309, K369, and K381.

It belongs to the DEAD box helicase family. eIF4A subfamily. EIF4F is a multi-subunit complex, the composition of which varies with external and internal environmental conditions. It is composed of at least EIF4A, EIF4E and EIF4G1/EIF4G3. Interacts with PAIP1, EIF4E and UPF2. Found in a complex with XPO7, EIF4A1, ARHGAP1, VPS26A, VPS29, VPS35 and SFN. May interact with NOM1. Interacts with PDCD4; this interferes with the interaction between EIF4A and EIF4G. Interacts with RBM4. Interacts with DDX3X in an RNA-independent manner. Interacts with PKP1 (via N-terminus); the interaction promotes EIF4A1 recruitment to the cap-dependent translation complex and EIF4A1 ATPase activity.

It is found in the cytoplasm. Its subcellular location is the perinuclear region. The protein localises to the cell membrane. The protein resides in the stress granule. It carries out the reaction ATP + H2O = ADP + phosphate + H(+). Functionally, ATP-dependent RNA helicase which is a subunit of the eIF4F complex involved in cap recognition and is required for mRNA binding to ribosome. In the current model of translation initiation, eIF4A unwinds RNA secondary structures in the 5'-UTR of mRNAs which is necessary to allow efficient binding of the small ribosomal subunit, and subsequent scanning for the initiator codon. As a result, promotes cell proliferation and growth. The protein is Eukaryotic initiation factor 4A-I (EIF4A1) of Pongo abelii (Sumatran orangutan).